We begin with the raw amino-acid sequence, 74 residues long: DUP240 protein DFP2 (74 aa).

This sequence belongs to the DUP/COS family.

It is found in the cytoplasm. The protein resides in the membrane. This Saccharomyces cerevisiae (strain ATCC 204508 / S288c) (Baker's yeast) protein is DUP240 protein DFP2.